The primary structure comprises 256 residues: 5'-nucleotidase SurE (256 aa).

Residues Asp8, Asp9, Ser42, and Asn94 each contribute to the a divalent metal cation site.

This sequence belongs to the SurE nucleotidase family. A divalent metal cation is required as a cofactor.

Its subcellular location is the cytoplasm. It catalyses the reaction a ribonucleoside 5'-phosphate + H2O = a ribonucleoside + phosphate. In terms of biological role, nucleotidase that shows phosphatase activity on nucleoside 5'-monophosphates. In Ehrlichia chaffeensis (strain ATCC CRL-10679 / Arkansas), this protein is 5'-nucleotidase SurE.